Here is a 509-residue protein sequence, read N- to C-terminus: T-complex protein 11-like protein 1 (509 aa).

Residues 1–12 show a composition bias toward basic and acidic residues; it reads MSENLDKSHVDE. Residues 1–57 form a disordered region; sequence MSENLDKSHVDEAGEAEAAASEQGLEGALECSDETLQKKVKSDSPSSQRVGRPHSSP. Residues 16 to 30 are compositionally biased toward low complexity; it reads AEAAASEQGLEGALE. A Phosphoserine modification is found at serine 56.

It belongs to the TCP11 family.

In Mus musculus (Mouse), this protein is T-complex protein 11-like protein 1 (Tcp11l1).